The sequence spans 245 residues: Uridylate kinase (245 aa).

15-18 is a binding site for ATP; that stretch reads KLSG. The interval 23 to 28 is involved in allosteric activation by GTP; sequence GDEGFG. Glycine 57 lines the UMP pocket. ATP-binding residues include glycine 58 and arginine 62. UMP contacts are provided by residues aspartate 77 and 138–145; that span reads TGNPFCTT. ATP-binding residues include threonine 165, tyrosine 171, and aspartate 174.

The protein belongs to the UMP kinase family. Homohexamer.

It localises to the cytoplasm. It catalyses the reaction UMP + ATP = UDP + ADP. It participates in pyrimidine metabolism; CTP biosynthesis via de novo pathway; UDP from UMP (UMPK route): step 1/1. With respect to regulation, allosterically activated by GTP. Inhibited by UTP. Its function is as follows. Catalyzes the reversible phosphorylation of UMP to UDP. In Shewanella sp. (strain W3-18-1), this protein is Uridylate kinase.